The chain runs to 634 residues: Threonine--tRNA ligase (634 aa).

The 61-residue stretch at 1-61 folds into the TGS domain; that stretch reads MINITLPDGS…DHDASLRIIT (61 aa). The segment at 243–534 is catalytic; the sequence is DHRRIGKAQD…LIEHHAGAFP (292 aa). Cys-334, His-385, and His-511 together coordinate Zn(2+).

It belongs to the class-II aminoacyl-tRNA synthetase family. As to quaternary structure, homodimer. The cofactor is Zn(2+).

The protein localises to the cytoplasm. It catalyses the reaction tRNA(Thr) + L-threonine + ATP = L-threonyl-tRNA(Thr) + AMP + diphosphate + H(+). Catalyzes the attachment of threonine to tRNA(Thr) in a two-step reaction: L-threonine is first activated by ATP to form Thr-AMP and then transferred to the acceptor end of tRNA(Thr). Also edits incorrectly charged L-seryl-tRNA(Thr). This chain is Threonine--tRNA ligase, found in Xanthomonas oryzae pv. oryzae (strain MAFF 311018).